A 402-amino-acid chain; its full sequence is Multidrug resistance protein MdtH (402 aa).

Over 1–12 (MSRVSQARNLGK) the chain is Cytoplasmic. Residues 13-33 (YFLLIDNMLVVLGFFVVFPLI) form a helical membrane-spanning segment. Over 34-98 (SIRFVDQMGW…GFATMGIAHE (65 aa)) the chain is Periplasmic. A helical membrane pass occupies residues 99 to 116 (PWLLWFSCLLSGLGGTLF). At 117–138 (DPPRSALVVKLIRPQQRCRFFS) the chain is on the cytoplasmic side. A helical transmembrane segment spans residues 139 to 159 (LLMMQDSAGAVIGALLGSWLL). The Periplasmic portion of the chain corresponds to 160 to 164 (QYDFR). The helical transmembrane segment at 165–185 (LVCATGAVLFVLCAAFNAWLL) threads the bilayer. The Cytoplasmic segment spans residues 186–213 (PAWKLSTVRTPVREGMTRVMRDKRFVTY). Residues 214-234 (VLTLAGYYMLAVQVMLMLPIM) form a helical membrane-spanning segment. Over 235 to 243 (VNDVAGAPS) the chain is Periplasmic. Residues 244–264 (AVKWMYAIEACLSLTLLYPIA) form a helical membrane-spanning segment. The Cytoplasmic portion of the chain corresponds to 265 to 276 (RWSEKHFRLEHR). Residues 277 to 297 (LMAGLLIMSLSMMPVGMVSGL) traverse the membrane as a helical segment. Residues 298-299 (QQ) lie on the Periplasmic side of the membrane. The chain crosses the membrane as a helical span at residues 300–320 (LFTLICLFYIGSIIAEPARET). Over 321–339 (LSALLADARARGSYMGFSR) the chain is Cytoplasmic. Residues 340–360 (LGLAIGGAIGYIGGGWLFDLG) form a helical membrane-spanning segment. Topologically, residues 361–367 (KSAHQPE) are periplasmic. A helical membrane pass occupies residues 368–388 (LPWMMLGIIGIFTFLALGWQF). The Cytoplasmic segment spans residues 389–402 (SQKRATRRLLERDA).

This sequence belongs to the major facilitator superfamily. DHA1 family. MdtH (TC 2.A.1.2.21) subfamily.

It is found in the cell inner membrane. This is Multidrug resistance protein MdtH from Shigella sonnei (strain Ss046).